A 525-amino-acid chain; its full sequence is GMP synthase [glutamine-hydrolyzing] (525 aa).

Residues 16-205 (PVLVVDFGAQ…LHDFAGLGAQ (190 aa)) form the Glutamine amidotransferase type-1 domain. Cys93 serves as the catalytic Nucleophile. Active-site residues include His179 and Glu181. A GMPS ATP-PPase domain is found at 206–399 (WTPANIANAL…LGLPEEIVAR (194 aa)). 233 to 239 (SGGVDSA) contacts ATP.

As to quaternary structure, homodimer.

It catalyses the reaction XMP + L-glutamine + ATP + H2O = GMP + L-glutamate + AMP + diphosphate + 2 H(+). Its pathway is purine metabolism; GMP biosynthesis; GMP from XMP (L-Gln route): step 1/1. Catalyzes the synthesis of GMP from XMP. The chain is GMP synthase [glutamine-hydrolyzing] (guaA) from Mycobacterium tuberculosis (strain CDC 1551 / Oshkosh).